We begin with the raw amino-acid sequence, 193 residues long: Interleukin-18 (193 aa).

Positions 1-36 (MAAEPVEDNCINFVAMKFIDNTLYFIAEDDENLESD) are excised as a propeptide.

This sequence belongs to the IL-1 family. In terms of assembly, forms a ternary complex with ligand-binding receptor subunit IL18R1 and signaling receptor subunit IL18RAP at the plasma membrane. Mature IL18 first binds to IL18R1 forming a low affinity binary complex, which then interacts with IL18RAP to form a high affinity ternary complex that signals inside the cell. Interacts with cargo receptor TMED10; the interaction mediates the translocation from the cytoplasm into the ERGIC (endoplasmic reticulum-Golgi intermediate compartment) and thereby secretion. Post-translationally, the pro-IL-18 precursor is processed by CASP1, CASP4 or CASP5 to yield its mature, active form. The pro-IL-18 precursor features autoinhibitory interactions between the propeptide and the post-cleavage-site region, preventing recognition by the IL18R1 receptor. Processing by CASP1, CASP4 or CASP5 induces conformational changes to generate critical receptor-binding sites. The mature form is then secreted and released in the extracellular milieu by passing through the gasdermin-D (GSDMD) pore. In contrast, cleavage by CASP3 inactivates IL18. Expressed in ovarian carcinoma but undetectable in normal ovarian epithelial cells. Resistant to proteolytic activation by caspase-1 and -4.

Its subcellular location is the cytoplasm. It localises to the cytosol. It is found in the secreted. Its function is as follows. Pro-inflammatory cytokine primarily involved in epithelial barrier repair, polarized T-helper 1 (Th1) cell and natural killer (NK) cell immune responses. Upon binding to IL18R1 and IL18RAP, forms a signaling ternary complex which activates NF-kappa-B, triggering synthesis of inflammatory mediators. Synergizes with IL12/interleukin-12 to induce IFNG synthesis from T-helper 1 (Th1) cells and natural killer (NK) cells. Involved in transduction of inflammation downstream of pyroptosis: its mature form is specifically released in the extracellular milieu by passing through the gasdermin-D (GSDMD) pore. The polypeptide is Interleukin-18 (Homo sapiens (Human)).